The chain runs to 180 residues: Large ribosomal subunit protein uL5c (180 aa).

It belongs to the universal ribosomal protein uL5 family. As to quaternary structure, part of the 50S ribosomal subunit; contacts the 5S rRNA.

It localises to the plastid. The protein resides in the chloroplast. Functionally, binds 5S rRNA, forms part of the central protuberance of the 50S subunit. The sequence is that of Large ribosomal subunit protein uL5c (rpl5) from Chlorella vulgaris (Green alga).